Consider the following 652-residue polypeptide: Acetyl-coenzyme A synthetase (652 aa).

CoA-binding positions include 191–194, Thr-311, and Asn-335; that span reads RAGR. ATP-binding positions include 387 to 389, 411 to 416, Asp-500, and Arg-515; these read GEP and DTWWQT. Ser-523 contributes to the CoA binding site. Arg-526 contacts ATP. Mg(2+)-binding residues include Val-537, His-539, and Ile-542. Arg-584 provides a ligand contact to CoA. Position 609 is an N6-acetyllysine (Lys-609).

The protein belongs to the ATP-dependent AMP-binding enzyme family. Mg(2+) serves as cofactor. Acetylated. Deacetylation by the SIR2-homolog deacetylase activates the enzyme.

The enzyme catalyses acetate + ATP + CoA = acetyl-CoA + AMP + diphosphate. Functionally, catalyzes the conversion of acetate into acetyl-CoA (AcCoA), an essential intermediate at the junction of anabolic and catabolic pathways. Acs undergoes a two-step reaction. In the first half reaction, Acs combines acetate with ATP to form acetyl-adenylate (AcAMP) intermediate. In the second half reaction, it can then transfer the acetyl group from AcAMP to the sulfhydryl group of CoA, forming the product AcCoA. In terms of biological role, enables the cell to use acetate during aerobic growth to generate energy via the TCA cycle, and biosynthetic compounds via the glyoxylate shunt. Acetylates CheY, the response regulator involved in flagellar movement and chemotaxis. This chain is Acetyl-coenzyme A synthetase, found in Escherichia coli O6:H1 (strain CFT073 / ATCC 700928 / UPEC).